Reading from the N-terminus, the 340-residue chain is Glyceraldehyde-3-phosphate dehydrogenase (340 aa).

NAD(+) is bound by residues 11–12 and Gly-111; that span reads SI. A D-glyceraldehyde 3-phosphate-binding site is contributed by 140–142; it reads SCN. The Nucleophile role is filled by Cys-141. Arg-169 is an NAD(+) binding site. 195–196 contributes to the D-glyceraldehyde 3-phosphate binding site; sequence HG. Residue Gln-303 participates in NAD(+) binding.

The protein belongs to the glyceraldehyde-3-phosphate dehydrogenase family. Homotetramer.

The protein resides in the cytoplasm. The catalysed reaction is D-glyceraldehyde 3-phosphate + phosphate + NADP(+) = (2R)-3-phospho-glyceroyl phosphate + NADPH + H(+). It catalyses the reaction D-glyceraldehyde 3-phosphate + phosphate + NAD(+) = (2R)-3-phospho-glyceroyl phosphate + NADH + H(+). Its pathway is carbohydrate degradation; glycolysis; pyruvate from D-glyceraldehyde 3-phosphate: step 1/5. The chain is Glyceraldehyde-3-phosphate dehydrogenase from Methanococcus maripaludis (strain C5 / ATCC BAA-1333).